Reading from the N-terminus, the 57-residue chain is Large ribosomal subunit protein bL32c (57 aa).

Belongs to the bacterial ribosomal protein bL32 family.

The protein resides in the plastid. The protein localises to the chloroplast. The chain is Large ribosomal subunit protein bL32c from Vitis vinifera (Grape).